The chain runs to 277 residues: Diaminopimelate epimerase (277 aa).

3 residues coordinate substrate: Asn17, Gln50, and Asn68. Cys77 (proton donor) is an active-site residue. Residues 78–79, Asn162, Asn195, and 213–214 each bind substrate; these read GN and ER. The active-site Proton acceptor is Cys222. 223–224 is a binding site for substrate; the sequence is GT.

Belongs to the diaminopimelate epimerase family. As to quaternary structure, homodimer.

Its subcellular location is the cytoplasm. It carries out the reaction (2S,6S)-2,6-diaminopimelate = meso-2,6-diaminopimelate. It participates in amino-acid biosynthesis; L-lysine biosynthesis via DAP pathway; DL-2,6-diaminopimelate from LL-2,6-diaminopimelate: step 1/1. Functionally, catalyzes the stereoinversion of LL-2,6-diaminopimelate (L,L-DAP) to meso-diaminopimelate (meso-DAP), a precursor of L-lysine and an essential component of the bacterial peptidoglycan. In Phenylobacterium zucineum (strain HLK1), this protein is Diaminopimelate epimerase.